Reading from the N-terminus, the 610-residue chain is GATOR complex protein NPRL3 (610 aa).

Position 437 is a phosphoserine (Ser-437). Residues Arg-474 to Ser-501 are disordered. The segment covering Ser-482 to Ser-501 has biased composition (polar residues).

It belongs to the NPR3 family. Component of the GATOR complex consisting of mio, Nup44A/Seh1, Im11, Nplr3, Nplr2, Wdr24, Wdr59 and Sec13. Within the GATOR complex, probable component of the GATOR1 subcomplex which is likely composed of Iml1, Nplr2 and Nplr3. Interacts with Nprl2.

It localises to the cytoplasm. Its subcellular location is the lysosome. Functionally, an essential component of the GATOR subcomplex GATOR1 which functions as an inhibitor of the amino acid-sensing branch of the TORC1 signaling pathway. The two GATOR subcomplexes, GATOR1 and GATOR2, regulate the TORC1 pathway in order to mediate metabolic homeostasis, female gametogenesis and the response to amino acid limitation and complete starvation. The function of GATOR1 in negatively regulating the TORC1 pathway is essential for maintaining baseline levels of TORC1 activity under nutrient rich conditions, and for promoting survival during amino acid or complete starvation by inhibiting TORC1-dependent cell growth and promoting catabolic metabolism and autophagy. In addition, this inhibition of TORC1 is necessary to maintain female fertility under normal conditions and during periods of nutrient stress. GATOR1 and GATOR2 act at different stages of oogenesis to regulate TORC1 in order to control meiotic entry and promote oocyte growth and development. After exactly four mitotic cyst divisions, the GATOR1 complex members (Iml1, Nprl2 and Nprl3) down-regulate TORC1 to slow cellular metabolism and promote the mitotic/meiotic transition. At later stages of oogenesis, the mio and Nup44A components of the GATOR2 complex inhibit GATOR1 and thus activate TORC1 to promote meiotic progression, and drive oocyte growth and development. The chain is GATOR complex protein NPRL3 from Drosophila melanogaster (Fruit fly).